The sequence spans 173 residues: Translocon-associated protein subunit delta (173 aa).

The signal sequence occupies residues 1–23 (MAAMASFGALALLLLSGLSCCSA). Residues 24 to 144 (EACLEPQITP…SVDHRGTWNG (121 aa)) are Lumenal-facing. Residues Cys-26 and Cys-57 are joined by a disulfide bond. Lys-73 participates in a covalent cross-link: Glycyl lysine isopeptide (Lys-Gly) (interchain with G-Cter in ubiquitin). Residues 145–165 (PWVSTEVLAAAIGIVIYYLAF) traverse the membrane as a helical segment. At 166-173 (SAKSHIQA) the chain is on the cytoplasmic side.

This sequence belongs to the TRAP-delta family. Heterotetramer of TRAP-alpha, TRAP-beta, TRAP-delta and TRAP-gamma.

Its subcellular location is the endoplasmic reticulum membrane. In terms of biological role, TRAP proteins are part of a complex whose function is to bind calcium to the ER membrane and thereby regulate the retention of ER resident proteins. The polypeptide is Translocon-associated protein subunit delta (Ssr4) (Rattus norvegicus (Rat)).